The chain runs to 282 residues: uncharacterized protein (282 aa).

The region spanning 5 to 140 (DELIKLHEEH…SFQPYTKKLD (136 aa)) is the N-acetyltransferase domain.

This sequence belongs to the acetyltransferase family.

This is an uncharacterized protein from Bacillus subtilis (strain 168).